We begin with the raw amino-acid sequence, 83 residues long: MDSIISAASVIAAGLAVGLAAIGPGIGQGTASAQAVEGIARQPEAEGKIRGTLLLSLAFMEALTIYGLVVALSLLFANPFINQ.

The next 2 membrane-spanning stretches (helical) occupy residues 4 to 24 and 57 to 77; these read IISAASVIAAGLAVGLAAIGP and LAFMEALTIYGLVVALSLLFA.

It belongs to the ATPase C chain family. In terms of assembly, F-type ATPases have 2 components, F(1) - the catalytic core - and F(0) - the membrane proton channel. F(1) has five subunits: alpha(3), beta(3), gamma(1), delta(1), epsilon(1). F(0) has four main subunits: a(1), b(1), b'(1) and c(10-14). The alpha and beta chains form an alternating ring which encloses part of the gamma chain. F(1) is attached to F(0) by a central stalk formed by the gamma and epsilon chains, while a peripheral stalk is formed by the delta, b and b' chains.

The protein localises to the plastid. Its subcellular location is the chloroplast thylakoid membrane. F(1)F(0) ATP synthase produces ATP from ADP in the presence of a proton or sodium gradient. F-type ATPases consist of two structural domains, F(1) containing the extramembraneous catalytic core and F(0) containing the membrane proton channel, linked together by a central stalk and a peripheral stalk. During catalysis, ATP synthesis in the catalytic domain of F(1) is coupled via a rotary mechanism of the central stalk subunits to proton translocation. Functionally, key component of the F(0) channel; it plays a direct role in translocation across the membrane. A homomeric c-ring of between 10-14 subunits forms the central stalk rotor element with the F(1) delta and epsilon subunits. This Galdieria sulphuraria (Red alga) protein is ATP synthase subunit c, chloroplastic.